The following is a 268-amino-acid chain: Shikimate dehydrogenase (NADP(+)) (268 aa).

Shikimate-binding positions include 13–15 and Thr60; that span reads SLS. Lys64 acts as the Proton acceptor in catalysis. Glu76 contacts NADP(+). Asn85 and Asp100 together coordinate shikimate. NADP(+) contacts are provided by residues 124 to 128, 148 to 153, and Ile209; these read GAGGA and NRTMAR. Tyr211 is a shikimate binding site. Residue Gly232 participates in NADP(+) binding.

It belongs to the shikimate dehydrogenase family. As to quaternary structure, homodimer.

It carries out the reaction shikimate + NADP(+) = 3-dehydroshikimate + NADPH + H(+). It participates in metabolic intermediate biosynthesis; chorismate biosynthesis; chorismate from D-erythrose 4-phosphate and phosphoenolpyruvate: step 4/7. In terms of biological role, involved in the biosynthesis of the chorismate, which leads to the biosynthesis of aromatic amino acids. Catalyzes the reversible NADPH linked reduction of 3-dehydroshikimate (DHSA) to yield shikimate (SA). The polypeptide is Shikimate dehydrogenase (NADP(+)) (Staphylococcus aureus (strain bovine RF122 / ET3-1)).